The sequence spans 135 residues: C-type lectin BpLec (135 aa).

4 disulfides stabilise this stretch: cysteine 3–cysteine 14, cysteine 31–cysteine 131, cysteine 38–cysteine 133, and cysteine 106–cysteine 123. A C-type lectin domain is found at 10-132 (MNGLCYKIFD…CESKNAFLCQ (123 aa)). Residues glutamine 96, aspartate 98, glutamate 104, asparagine 119, and aspartate 120 each contribute to the Ca(2+) site. The Galactose-binding signature appears at 96 to 98 (QPD).

It belongs to the true venom lectin family. Homodimer; disulfide-linked. Expressed by the venom gland.

Its subcellular location is the secreted. This lectin displays hemagglutinating activity on dog (128'000 HU/mg) and cat erythrocytes, that is inhibited by beta-galactosides (D-galactose, D-lactose, and N-acetyl-D-galactosamine) and EDTA. In addition, has been shown to hemagglutinate promastigote forms of Leishmania amazonensis. Also inhibits Gram-positive (S.aureus ATCC 25923) (MIC is 31.25 ug/ml) but not Gram-negative (E.coli ATCC 25922) bacteria. Is a calcium-dependent lectin. In Bothrops pauloensis (Neuwied's lancehead), this protein is C-type lectin BpLec.